The chain runs to 277 residues: Large ribosomal subunit protein uL2 (277 aa).

The disordered stretch occupies residues G222–K277.

Belongs to the universal ribosomal protein uL2 family. In terms of assembly, part of the 50S ribosomal subunit. Forms a bridge to the 30S subunit in the 70S ribosome.

One of the primary rRNA binding proteins. Required for association of the 30S and 50S subunits to form the 70S ribosome, for tRNA binding and peptide bond formation. It has been suggested to have peptidyltransferase activity; this is somewhat controversial. Makes several contacts with the 16S rRNA in the 70S ribosome. The polypeptide is Large ribosomal subunit protein uL2 (Bartonella bacilliformis (strain ATCC 35685 / KC583 / Herrer 020/F12,63)).